The primary structure comprises 314 residues: MKRFKNIAVYGGGSFGTSLAAIAARVCENVTLFLRDEEIAKEITDKKTNTKYLGNIKLPSNLQATTNLDKIKDFELIIIAVPSYAFDEAIKLLKTHISNDNILLIATKGFARNPTELFSDRLKTLLSNNPIAFLSGPNLAKDLAKGLPASATIASLDIDLANKISYNLSSEAFVASTINDVITLQVAGALKNIFAIKSGIDMAKEQGENAKATLIVSALKEIAILSKALGGMKNNMDILLEAGVVGDLVLTCYSRSSRNTKFGYEFGISKDKQKFLQEYKELVEGREAIKLVLELIERYDLDMPIVSSLGNVIR.

S14, F15, R35, and K108 together coordinate NADPH. 2 residues coordinate sn-glycerol 3-phosphate: K108 and G136. NADPH is bound at residue A140. Sn-glycerol 3-phosphate contacts are provided by K191, D247, S257, R258, and N259. K191 serves as the catalytic Proton acceptor. R258 contacts NADPH. 2 residues coordinate NADPH: L282 and E284.

The protein belongs to the NAD-dependent glycerol-3-phosphate dehydrogenase family.

It is found in the cytoplasm. It catalyses the reaction sn-glycerol 3-phosphate + NAD(+) = dihydroxyacetone phosphate + NADH + H(+). The enzyme catalyses sn-glycerol 3-phosphate + NADP(+) = dihydroxyacetone phosphate + NADPH + H(+). The protein operates within membrane lipid metabolism; glycerophospholipid metabolism. Functionally, catalyzes the reduction of the glycolytic intermediate dihydroxyacetone phosphate (DHAP) to sn-glycerol 3-phosphate (G3P), the key precursor for phospholipid synthesis. The sequence is that of Glycerol-3-phosphate dehydrogenase [NAD(P)+] from Rickettsia bellii (strain OSU 85-389).